The sequence spans 577 residues: Protein GPR108 (577 aa).

Residues 1–34 (MAVSERRGLSGESPAQCRWEYLSLLVLMLSGCSG) form the signal peptide. Asparagine 59 and asparagine 111 each carry an N-linked (GlcNAc...) asparagine glycan. The tract at residues 144-224 (LLPEAPSQSG…TRGPSGKEKD (81 aa)) is disordered. 2 N-linked (GlcNAc...) asparagine glycosylation sites follow: asparagine 233 and asparagine 237. Helical transmembrane passes span 296 to 316 (LYLI…SVLC), 325 to 345 (IHWL…FHSI), 369 to 389 (LLKG…WAFV), 400 to 420 (IFGI…VIES), 434 to 454 (ILFL…VWSI), 482 to 502 (VMVI…RVAV), and 506 to 526 (WQWL…VLTG).

Belongs to the LU7TM family.

It localises to the golgi apparatus. Its subcellular location is the cis-Golgi network membrane. The protein resides in the trans-Golgi network membrane. It is found in the golgi apparatus membrane. May play a role in intracellular immune modulation by activating NF-kappaB response and attenuating Toll-like-receptor response. The sequence is that of Protein GPR108 (Gpr108) from Rattus norvegicus (Rat).